An 87-amino-acid polypeptide reads, in one-letter code: Small ribosomal subunit protein bS20 (87 aa).

Belongs to the bacterial ribosomal protein bS20 family.

In terms of biological role, binds directly to 16S ribosomal RNA. In Shigella flexneri serotype 5b (strain 8401), this protein is Small ribosomal subunit protein bS20.